We begin with the raw amino-acid sequence, 210 residues long: Natriuretic peptide BM026 (210 aa).

The signal sequence occupies residues Met-1–Gly-26. Positions Cys-83 to Cys-99 are natriuretic peptide domain 1. Cys-83 and Cys-99 are disulfide-bonded. Over residues Glu-122–Val-134 the composition is skewed to basic and acidic residues. The interval Glu-122–Ala-210 is disordered. The segment covering Ala-140–Asp-150 has biased composition (gly residues). Residues Glu-156–His-176 show a composition bias toward basic and acidic residues. The interval Cys-166–Cys-182 is natriuretic peptide domain 2. Cys-166 and Cys-182 are joined by a disulfide. The span at Gln-201–Ala-210 shows a compositional bias: polar residues.

The protein belongs to the natriuretic peptide family. As to expression, expressed by the venom gland.

The protein resides in the secreted. Functionally, natriuretic peptide that dose-dependently induces the rapid relaxation of rat aortic strips phenylephrine-precontracted. Acts by stimulating cGMP production in a dose-dependent manner (by probably activating NPR1 and/or NPR2). May also show potent hypotensive effects. This chain is Natriuretic peptide BM026, found in Bungarus multicinctus (Many-banded krait).